Here is a 106-residue protein sequence, read N- to C-terminus: UPF0145 protein SCO3412 (106 aa).

Belongs to the UPF0145 family.

The chain is UPF0145 protein SCO3412 from Streptomyces coelicolor (strain ATCC BAA-471 / A3(2) / M145).